Here is a 357-residue protein sequence, read N- to C-terminus: NADH-quinone oxidoreductase subunit H (357 aa).

Transmembrane regions (helical) follow at residues valine 18–leucine 38, valine 92–valine 112, leucine 127–alanine 147, valine 165–leucine 185, phenylalanine 206–valine 226, isoleucine 268–isoleucine 288, isoleucine 294–phenylalanine 314, and leucine 329–methionine 349.

It belongs to the complex I subunit 1 family. In terms of assembly, NDH-1 is composed of 14 different subunits. Subunits NuoA, H, J, K, L, M, N constitute the membrane sector of the complex.

The protein resides in the cell inner membrane. The catalysed reaction is a quinone + NADH + 5 H(+)(in) = a quinol + NAD(+) + 4 H(+)(out). Functionally, NDH-1 shuttles electrons from NADH, via FMN and iron-sulfur (Fe-S) centers, to quinones in the respiratory chain. The immediate electron acceptor for the enzyme in this species is believed to be ubiquinone. Couples the redox reaction to proton translocation (for every two electrons transferred, four hydrogen ions are translocated across the cytoplasmic membrane), and thus conserves the redox energy in a proton gradient. This subunit may bind ubiquinone. The sequence is that of NADH-quinone oxidoreductase subunit H from Bordetella bronchiseptica (strain ATCC BAA-588 / NCTC 13252 / RB50) (Alcaligenes bronchisepticus).